The primary structure comprises 267 residues: X-box-binding protein 1 (267 aa).

Residues 1–180 (MVVVAAAPSA…VQAQLSPPQN (180 aa)) are Cytoplasmic-facing. Residues 35–56 (VPGPRAAGSEASGTPQARKRQR) form a disordered region. Ser-61 is modified (phosphoserine). The bZIP domain maps to 63-126 (EEKALRRKLK…HGLVVENQEL (64 aa)). The basic motif stretch occupies residues 65 to 87 (KALRRKLKNRVAAQTARDRKKAR). The segment at 69–85 (RKLKNRVAAQTARDRKK) is nuclear localization signal (NLS). The segment at 91-126 (LEQQVVDLEEENHKLQLENQLLREKTHGLVVENQEL) is leucine-zipper. The helical; Signal-anchor for type II membrane protein transmembrane segment at 181–198 (IFPWTLTLLPLQILSLIS) threads the bilayer. Over 199–267 (FWAFWTSWTL…FVLTMYTPSL (69 aa)) the chain is Lumenal. The segment at 230–256 (QKDLVPYQPPFLCQWGPHQPSWKPLMN) is necessary for the translational pausing of its own mRNA.

It belongs to the bZIP family. As to quaternary structure, isoform 1 interacts with HM13. Isoform 1 interacts with RNF139; the interaction induces ubiquitination and degradation of isoform 1. Isoform 1 interacts (via luminal domain) with DERL1; the interaction obviates the need for ectodomain shedding prior HM13/SPP-mediated XBP1 isoform 1 cleavage. Isoform 1 interacts with isoform 2; the interaction sequesters isoform 2 from the nucleus and enhances isoform 2 degradation in the cytoplasm. Isoform 1 interacts with HDAC3 and AKT1; the interactions occur in endothelial cell (EC) under disturbed flow. Isoform 1 interacts with the oncoprotein FOS. Isoform 2 interacts with ATF6; the interaction occurs in a ER stress-dependent manner and is required for DNA binding to the unfolded protein response element (UPRE). Isoform 2 interacts with PIK3R1; the interaction is direct and induces translocation of XBP1 isoform 2 into the nucleus and the unfolded protein response (UPR) XBP1-dependent target genes activation in a ER stress- and/or insulin-dependent but PI3K-independent manner. Isoform 2 interacts with SIRT1. Isoform 2 interacts with PIK3R1 and PIK3R2; the interactions are direct and induce translocation of XBP1 isoform 2 into the nucleus and the unfolded protein response (UPR) XBP1-dependent target genes activation in a ER stress- and/or insulin-dependent but PI3K-independent manner. Isoform 2 interacts with FOXO1; the interaction is direct and leads to FOXO1 ubiquitination and degradation via the proteasome pathway in hepatocytes. In terms of processing, acetylated by EP300; acetylation positively regulates the transcriptional activity of XBP1 isoform 2. Isoform 2 is deacetylated by SIRT1; deacetylation negatively regulates the transcriptional activity of XBP1 isoform 2. Post-translationally, ubiquitinated, leading to proteasomal degradation in response to ER stress. X-box-binding protein 1, cytoplasmic form and luminal form are produced by intramembrane proteolytic cleavage of ER membrane-anchored isoform 1 triggered by HM13/SPP in a DERL1-RNF139-dependent and VCP/p97-independent manner. X-box-binding protein 1, luminal form is ubiquitinated leading to proteasomal degradation. In terms of tissue distribution, isoform 1 and isoform 2 are expressed at higher level in branch curves of vessel walls and in atherosclerotic plaques relative to healthy segments of the same aortas (at protein level). Expressed in skeletal muscles, plasma cells and pancreatic beta cells. Isoform 1 and isoform 2 are expressed in gonadal adipose tissue. Isoform 1 is expressed in inguinal adipose tissue.

The protein localises to the endoplasmic reticulum. Its subcellular location is the nucleus. It localises to the cytoplasm. It is found in the endoplasmic reticulum membrane. The protein resides in the membrane. Functions as a transcription factor during endoplasmic reticulum stress by regulating the unfolded protein response (UPR). Required for cardiac myogenesis and hepatogenesis during embryonic development and the development of secretory tissues such as exocrine pancreas and salivary gland. Involved in differentiation of B lymphocytes to plasma cells and production of immunoglobulins. Modulates the cellular response to ER stress in a PIK3R-dependent manner. Binds to the cis-acting X box present in the promoter regions of major histocompatibility complex class II genes. Involved in VEGF-induced endothelial cell (EC) proliferation and retinal blood vessel formation during embryonic development but also for angiogenesis in adult tissues under ischemic conditions. Also functions as a major regulator of the UPR in obesity-induced insulin resistance and type 2 diabetes for the management of obesity and diabetes prevention. In terms of biological role, plays a role in the unconventional cytoplasmic splicing processing of its own mRNA triggered by the endoplasmic reticulum (ER) transmembrane endoribonuclease ERN1: upon ER stress, the emerging XBP1 polypeptide chain, as part of a mRNA-ribosome-nascent chain (R-RNC) complex, cotranslationally recruits its own unprocessed mRNA through transient docking to the ER membrane and translational pausing, therefore facilitating efficient IRE1-mediated XBP1 mRNA isoform 2 production. In endothelial cells (EC), associated with KDR, promotes IRE1-mediated XBP1 mRNA isoform 2 production in a vascular endothelial growth factor (VEGF)-dependent manner, leading to EC proliferation and angiogenesis. Functions as a negative feed-back regulator of the potent transcription factor XBP1 isoform 2 protein levels through proteasome-mediated degradation, thus preventing the constitutive activation of the ER stress response signaling pathway. Inhibits the transactivation activity of XBP1 isoform 2 in myeloma cells. Acts as a weak transcriptional factor. Together with HDAC3, contributes to the activation of NFE2L2-mediated HMOX1 transcription factor gene expression in a PI(3)K/mTORC2/Akt-dependent signaling pathway leading to EC survival under disturbed flow/oxidative stress. Binds to the ER stress response element (ERSE) upon ER stress. Binds to the consensus 5'-GATGACGTG[TG]N(3)[AT]T-3' sequence related to cAMP responsive element (CRE)-like sequences. Binds the Tax-responsive element (TRE) present in the long terminal repeat (LTR) of T-cell leukemia virus type 1 (HTLV-I) and to the TPA response elements (TRE). Associates preferentially to the HDAC3 gene promoter region in a static flow-dependent manner. Binds to the CDH5/VE-cadherin gene promoter region. Functionally, functions as a stress-inducible potent transcriptional activator during endoplasmic reticulum (ER) stress by inducing unfolded protein response (UPR) target genes via binding to the UPR element (UPRE). Up-regulates target genes encoding ER chaperones and ER-associated degradation (ERAD) components to enhance the capacity of productive folding and degradation mechanism, respectively, in order to maintain the homeostasis of the ER under ER stress. Plays a role in the production of immunoglobulins and interleukin-6 in the presence of stimuli required for plasma cell differentiation, and promotes as well membrane phospholipid biosynthesis necessary for ER expansion. Contributes to the VEGF-induced endothelial cell (EC) growth and proliferation in a Akt/GSK-dependent and/or -independent signaling pathway, respectively, leading to beta-catenin nuclear translocation and E2F2 gene expression. Promotes umbilical vein EC apoptosis and atherosclerotisis development in a caspase-dependent signaling pathway, and contributes to VEGF-induced EC proliferation and angiogenesis in adult tissues under ischemic conditions. Involved in the regulation of endostatin-induced autophagy in EC through BECN1 transcriptional activation. Plays a role as an oncogene by promoting tumor progression: stimulates zinc finger protein SNAI1 transcription to induce epithelial-to-mesenchymal (EMT) transition, cell migration and invasion of breast cancer cells. Involved in adipocyte differentiation by regulating lipogenic gene expression during lactation. Plays a role in the survival of both dopaminergic neurons of the substantia nigra pars compacta (SNpc), by maintaining protein homeostasis and of myeloma cells. Increases insulin sensitivity in the liver as a response to a high carbohydrate diet, resulting in improved glucose tolerance. Also improves glucose homeostasis in an ER stress- and/or insulin-independent manner through both binding and proteasome-induced degradation of the transcription factor FOXO1, hence resulting in suppression of gluconeogenic genes expression and in a reduction of blood glucose levels. Controls the induction of de novo fatty acid synthesis in hepatocytes by regulating the expression of a subset of lipogenic genes in an ER stress- and UPR-independent manner. Binds to the 5'-CCACG-3' motif in the PPARG promoter. Associates preferentially to the HDAC3 gene promoter region in a disturbed flow-dependent manner. Binds to the BECN1 gene promoter region. Binds to the CDH5/VE-cadherin gene promoter region. Binds to the ER stress response element (ERSE) upon ER stress. In Mus musculus (Mouse), this protein is X-box-binding protein 1.